Reading from the N-terminus, the 252-residue chain is Adenosylcobinamide-GDP ribazoletransferase (252 aa).

7 helical membrane passes run 4 to 24 (LFKG…PYVE), 38 to 58 (PIIG…INYL), 60 to 80 (ISIV…TGML), 113 to 133 (FSVI…HSFL), 141 to 161 (ILMF…ITII), 190 to 210 (LVCI…LLIV), and 232 to 252 (VAGF…CLFT).

Belongs to the CobS family. Mg(2+) serves as cofactor.

The protein resides in the cell membrane. It carries out the reaction alpha-ribazole + adenosylcob(III)inamide-GDP = adenosylcob(III)alamin + GMP + H(+). The catalysed reaction is alpha-ribazole 5'-phosphate + adenosylcob(III)inamide-GDP = adenosylcob(III)alamin 5'-phosphate + GMP + H(+). Its pathway is cofactor biosynthesis; adenosylcobalamin biosynthesis; adenosylcobalamin from cob(II)yrinate a,c-diamide: step 7/7. Joins adenosylcobinamide-GDP and alpha-ribazole to generate adenosylcobalamin (Ado-cobalamin). Also synthesizes adenosylcobalamin 5'-phosphate from adenosylcobinamide-GDP and alpha-ribazole 5'-phosphate. The polypeptide is Adenosylcobinamide-GDP ribazoletransferase (Clostridium botulinum (strain Eklund 17B / Type B)).